Consider the following 485-residue polypeptide: Terminase, large subunit (485 aa).

Residues 17–22, 40–45, and arginine 79 contribute to the ADP site; these read KPHHVQ and QSGKSE. The interval 22–197 is ATPase activity; that stretch reads QLAIHRSTAK…EFFLMGWRGG (176 aa). ATP contacts are provided by glutamine 97 and glutamine 99. Residues 125 to 131 carry the Walker A motif motif; that stretch reads SEFRGKS. Residues 145-150 carry the Walker B motif motif; it reads FVILDE. The For ATPase activity role is filled by glutamate 150. Positions 256–438 are nuclease; the sequence is SNSVFSGLDM…DIVMSLALAY (183 aa). Mg(2+)-binding residues include aspartate 294, aspartate 347, and aspartate 429.

The protein belongs to the Tequatrovirus large terminase family. In terms of assembly, interacts with the terminase small subunit; the active complex is composed of a pentamer of terminase large subunits and a dodecamer of terminase small subunits. Interacts with the portal protein. Mg(2+) serves as cofactor.

Its function is as follows. The terminase large subunit acts as an ATP driven molecular motor necessary for viral DNA translocation into empty capsids and as an endonuclease that cuts the viral genome to initiate and to end a packaging reaction The terminase lies at a unique vertex of the procapsid and is composed of two subunits, a small terminase subunit involved in viral DNA recognition (packaging sequence), and a large terminase subunit possessing endonucleolytic and ATPase activities. Both terminase subunits heterooligomerize and are docked on the portal protein to form the packaging machine. The terminase large subunit exhibits endonuclease activity and cleaves the viral genome concatemer. Once the capsid is packaged with the DNA, the terminase complex is substituted by the tail. This is Terminase, large subunit from Thermus thermophilus (Thermus thermophilus phage P23-45).